The chain runs to 101 residues: Small ribosomal subunit protein uS14 (101 aa).

The protein belongs to the universal ribosomal protein uS14 family. Part of the 30S ribosomal subunit. Contacts proteins S3 and S10.

In terms of biological role, binds 16S rRNA, required for the assembly of 30S particles and may also be responsible for determining the conformation of the 16S rRNA at the A site. In Ruegeria pomeroyi (strain ATCC 700808 / DSM 15171 / DSS-3) (Silicibacter pomeroyi), this protein is Small ribosomal subunit protein uS14.